Reading from the N-terminus, the 162-residue chain is NADH-quinone oxidoreductase subunit I (162 aa).

2 4Fe-4S ferredoxin-type domains span residues 54–83 (RRYE…INST) and 93–122 (SSYE…ETNI). [4Fe-4S] cluster contacts are provided by C63, C66, C69, C73, C102, C105, C108, and C112.

This sequence belongs to the complex I 23 kDa subunit family. As to quaternary structure, NDH-1 is composed of 14 different subunits. Subunits NuoA, H, J, K, L, M, N constitute the membrane sector of the complex. [4Fe-4S] cluster serves as cofactor.

The protein resides in the cell inner membrane. The enzyme catalyses a quinone + NADH + 5 H(+)(in) = a quinol + NAD(+) + 4 H(+)(out). Its function is as follows. NDH-1 shuttles electrons from NADH, via FMN and iron-sulfur (Fe-S) centers, to quinones in the respiratory chain. The immediate electron acceptor for the enzyme in this species is believed to be ubiquinone. Couples the redox reaction to proton translocation (for every two electrons transferred, four hydrogen ions are translocated across the cytoplasmic membrane), and thus conserves the redox energy in a proton gradient. This is NADH-quinone oxidoreductase subunit I from Francisella tularensis subsp. holarctica (strain FTNF002-00 / FTA).